The following is a 501-amino-acid chain: Glycerol kinase (501 aa).

T17 is an ADP binding site. 3 residues coordinate ATP: T17, T18, and S19. T17 is a sn-glycerol 3-phosphate binding site. R21 is an ADP binding site. 4 residues coordinate sn-glycerol 3-phosphate: R87, E88, Y139, and D243. Residues R87, E88, Y139, D243, and Q244 each coordinate glycerol. Positions 265 and 308 each coordinate ADP. Residues T265, G308, Q312, and G409 each coordinate ATP. The ADP site is built by G409 and N413.

It belongs to the FGGY kinase family.

The enzyme catalyses glycerol + ATP = sn-glycerol 3-phosphate + ADP + H(+). Its pathway is polyol metabolism; glycerol degradation via glycerol kinase pathway; sn-glycerol 3-phosphate from glycerol: step 1/1. With respect to regulation, inhibited by fructose 1,6-bisphosphate (FBP). Functionally, key enzyme in the regulation of glycerol uptake and metabolism. Catalyzes the phosphorylation of glycerol to yield sn-glycerol 3-phosphate. The polypeptide is Glycerol kinase (Pseudomonas savastanoi pv. phaseolicola (strain 1448A / Race 6) (Pseudomonas syringae pv. phaseolicola (strain 1448A / Race 6))).